Reading from the N-terminus, the 324-residue chain is Beta-ketoacyl-[acyl-carrier-protein] synthase III (324 aa).

Residues Cys112 and His251 contribute to the active site. An ACP-binding region spans residues 252 to 256; it reads QANLR. Asn281 is a catalytic residue.

This sequence belongs to the thiolase-like superfamily. FabH family. Homodimer.

The protein localises to the cytoplasm. It catalyses the reaction malonyl-[ACP] + acetyl-CoA + H(+) = 3-oxobutanoyl-[ACP] + CO2 + CoA. Its pathway is lipid metabolism; fatty acid biosynthesis. In terms of biological role, catalyzes the condensation reaction of fatty acid synthesis by the addition to an acyl acceptor of two carbons from malonyl-ACP. Catalyzes the first condensation reaction which initiates fatty acid synthesis and may therefore play a role in governing the total rate of fatty acid production. Possesses both acetoacetyl-ACP synthase and acetyl transacylase activities. Its substrate specificity determines the biosynthesis of branched-chain and/or straight-chain of fatty acids. The protein is Beta-ketoacyl-[acyl-carrier-protein] synthase III of Clostridium perfringens (strain SM101 / Type A).